The following is a 329-amino-acid chain: Beta-ketoacyl-[acyl-carrier-protein] synthase III (329 aa).

Residues C123 and H256 contribute to the active site. The interval 257–261 (QANIR) is ACP-binding. N286 is a catalytic residue.

Belongs to the thiolase-like superfamily. FabH family. In terms of assembly, homodimer.

Its subcellular location is the cytoplasm. The catalysed reaction is malonyl-[ACP] + acetyl-CoA + H(+) = 3-oxobutanoyl-[ACP] + CO2 + CoA. The protein operates within lipid metabolism; fatty acid biosynthesis. Catalyzes the condensation reaction of fatty acid synthesis by the addition to an acyl acceptor of two carbons from malonyl-ACP. Catalyzes the first condensation reaction which initiates fatty acid synthesis and may therefore play a role in governing the total rate of fatty acid production. Possesses both acetoacetyl-ACP synthase and acetyl transacylase activities. Its substrate specificity determines the biosynthesis of branched-chain and/or straight-chain of fatty acids. In Burkholderia thailandensis (strain ATCC 700388 / DSM 13276 / CCUG 48851 / CIP 106301 / E264), this protein is Beta-ketoacyl-[acyl-carrier-protein] synthase III.